A 356-amino-acid polypeptide reads, in one-letter code: Glutamine synthetase cytosolic isozyme (356 aa).

The region spanning 19–99 (IIAEYIWIGG…VMCDAYTPAG (81 aa)) is the GS beta-grasp domain. The segment at 38–66 (RTLPGPVTDPSQLPKWNYDGSSTGQAPGE) is disordered. A GS catalytic domain is found at 106 to 356 (KRHAAAKIFS…IADTTILWKP (251 aa)).

It belongs to the glutamine synthetase family. In terms of assembly, homooctamer.

The protein localises to the cytoplasm. It carries out the reaction L-glutamate + NH4(+) + ATP = L-glutamine + ADP + phosphate + H(+). The chain is Glutamine synthetase cytosolic isozyme from Medicago sativa (Alfalfa).